We begin with the raw amino-acid sequence, 235 residues long: Serine protease SplA (235 aa).

A signal peptide spans 1-35 (MNKNVMVKGLTALDILTSLGCAENISDQPHSIAKA). Active-site charge relay system residues include His74, Asp113, and Ser189.

It belongs to the peptidase S1B family.

It localises to the secreted. This Staphylococcus aureus protein is Serine protease SplA (splA).